The sequence spans 122 residues: MARIAGVNIPTAKRVVIALTYIHGIGTKFAHEIVEKVGIPTDRRVHQLTDAEVLQIRETIDRDYQVEGDLRRETSMNIKRLMDLGCYRGLRHRRGLPVRGQRTHTNARTRKGPAKAIAGKKK.

The tract at residues 99-122 (RGQRTHTNARTRKGPAKAIAGKKK) is disordered.

It belongs to the universal ribosomal protein uS13 family. In terms of assembly, part of the 30S ribosomal subunit. Forms a loose heterodimer with protein S19. Forms two bridges to the 50S subunit in the 70S ribosome.

Located at the top of the head of the 30S subunit, it contacts several helices of the 16S rRNA. In the 70S ribosome it contacts the 23S rRNA (bridge B1a) and protein L5 of the 50S subunit (bridge B1b), connecting the 2 subunits; these bridges are implicated in subunit movement. Contacts the tRNAs in the A and P-sites. The sequence is that of Small ribosomal subunit protein uS13 from Sinorhizobium fredii (strain NBRC 101917 / NGR234).